The primary structure comprises 262 residues: Tryptophan synthase alpha chain (262 aa).

Residues Glu-49 and Asp-60 each act as proton acceptor in the active site.

It belongs to the TrpA family. As to quaternary structure, tetramer of two alpha and two beta chains.

It carries out the reaction (1S,2R)-1-C-(indol-3-yl)glycerol 3-phosphate + L-serine = D-glyceraldehyde 3-phosphate + L-tryptophan + H2O. It functions in the pathway amino-acid biosynthesis; L-tryptophan biosynthesis; L-tryptophan from chorismate: step 5/5. In terms of biological role, the alpha subunit is responsible for the aldol cleavage of indoleglycerol phosphate to indole and glyceraldehyde 3-phosphate. The chain is Tryptophan synthase alpha chain from Thermoanaerobacter pseudethanolicus (strain ATCC 33223 / 39E) (Clostridium thermohydrosulfuricum).